Consider the following 651-residue polypeptide: Coiled-coil domain-containing protein 81 (651 aa).

Residues 194-314 (LSSRESFGKR…PKTSPAPACQ (121 aa)) form a disordered region. A Phosphoserine modification is found at Ser-206. Basic and acidic residues-rich tracts occupy residues 212–222 (RIEHKETENKP) and 232–250 (GENRPRKSKLKDQSDKEEG). Polar residues predominate over residues 265 to 275 (SISPAKVTSGS). Phosphoserine occurs at positions 273, 275, 294, and 416. Coiled-coil stretches lie at residues 428-465 (SQSLLKQMESKREKEIKQRQNRELMDRLEQVQLTEELA) and 539-566 (KRNTILNQLVDQRRDLQMLQRTKREHLA).

It is found in the cytoplasm. The protein resides in the cytoskeleton. It localises to the microtubule organizing center. Its subcellular location is the centrosome. This is Coiled-coil domain-containing protein 81 (Ccdc81) from Rattus norvegicus (Rat).